We begin with the raw amino-acid sequence, 146 residues long: LFDQKTIKYIPIHYVLNISPSQEPNYYQHRPVVPINNQQMPYRYYARPVAVRPHAQIPQWQVLPNIYPSTVVRHPYRRPSFIAIPPKKLQDKTVRPNINTIATVEPTLIPTTEPTVNNVVVPEASSEFIITSTPETTTIPVTSPVV.

Residues T107 and T112 are each glycosylated (O-linked (GalNAc...) threonine). S125 is subject to Phosphoserine; alternate. A glycan (O-linked (GalNAc...) serine; alternate) is linked at S125. O-linked (GalNAc...) threonine glycosylation occurs at T142. S143 carries the post-translational modification Phosphoserine.

It belongs to the kappa-casein family. As to expression, mammary gland specific. Secreted in milk.

Its subcellular location is the secreted. Functionally, kappa-casein stabilizes micelle formation, preventing casein precipitation in milk. The protein is Kappa-casein (CSN3) of Tapirus indicus (Asiatic tapir).